The sequence spans 364 residues: UDP-N-acetylglucosamine--N-acetylmuramyl-(pentapeptide) pyrophosphoryl-undecaprenol N-acetylglucosamine transferase 1 (364 aa).

Residues 10–12 (TGG), N124, S195, I250, and Q295 each bind UDP-N-acetyl-alpha-D-glucosamine.

The protein belongs to the glycosyltransferase 28 family. MurG subfamily.

It is found in the cell membrane. It carries out the reaction di-trans,octa-cis-undecaprenyl diphospho-N-acetyl-alpha-D-muramoyl-L-alanyl-D-glutamyl-meso-2,6-diaminopimeloyl-D-alanyl-D-alanine + UDP-N-acetyl-alpha-D-glucosamine = di-trans,octa-cis-undecaprenyl diphospho-[N-acetyl-alpha-D-glucosaminyl-(1-&gt;4)]-N-acetyl-alpha-D-muramoyl-L-alanyl-D-glutamyl-meso-2,6-diaminopimeloyl-D-alanyl-D-alanine + UDP + H(+). It functions in the pathway cell wall biogenesis; peptidoglycan biosynthesis. Cell wall formation. Catalyzes the transfer of a GlcNAc subunit on undecaprenyl-pyrophosphoryl-MurNAc-pentapeptide (lipid intermediate I) to form undecaprenyl-pyrophosphoryl-MurNAc-(pentapeptide)GlcNAc (lipid intermediate II). This Bacillus cereus (strain ATCC 14579 / DSM 31 / CCUG 7414 / JCM 2152 / NBRC 15305 / NCIMB 9373 / NCTC 2599 / NRRL B-3711) protein is UDP-N-acetylglucosamine--N-acetylmuramyl-(pentapeptide) pyrophosphoryl-undecaprenol N-acetylglucosamine transferase 1.